Consider the following 32-residue polypeptide: Kappa-conotoxin SrXIA (32 aa).

4 disulfide bridges follow: Cys1–Cys15, Cys8–Cys20, Cys14–Cys24, and Cys19–Cys28. Residues Glu9 and Glu10 each carry the 4-carboxyglutamate modification. Proline amide is present on Pro32.

The protein belongs to the conotoxin I2 superfamily. Expressed by the venom duct.

Its subcellular location is the secreted. Kappa-conotoxins bind and inhibit voltage-gated potassium channels. This toxin inhibits Kv1.2/KCNA2 and Kv1.6/KCNA6. Produces stiffening of body, limbs and tail when injected intracranially into mice. The polypeptide is Kappa-conotoxin SrXIA (Conus spurius (Alphabet cone)).